The sequence spans 247 residues: NAD(P)H-quinone oxidoreductase subunit K, chloroplastic (247 aa).

Cysteine 64, cysteine 65, cysteine 129, and cysteine 160 together coordinate [4Fe-4S] cluster.

It belongs to the complex I 20 kDa subunit family. NDH is composed of at least 16 different subunits, 5 of which are encoded in the nucleus. The cofactor is [4Fe-4S] cluster.

The protein localises to the plastid. It localises to the chloroplast thylakoid membrane. The enzyme catalyses a plastoquinone + NADH + (n+1) H(+)(in) = a plastoquinol + NAD(+) + n H(+)(out). It carries out the reaction a plastoquinone + NADPH + (n+1) H(+)(in) = a plastoquinol + NADP(+) + n H(+)(out). NDH shuttles electrons from NAD(P)H:plastoquinone, via FMN and iron-sulfur (Fe-S) centers, to quinones in the photosynthetic chain and possibly in a chloroplast respiratory chain. The immediate electron acceptor for the enzyme in this species is believed to be plastoquinone. Couples the redox reaction to proton translocation, and thus conserves the redox energy in a proton gradient. The polypeptide is NAD(P)H-quinone oxidoreductase subunit K, chloroplastic (Mesostigma viride (Green alga)).